Reading from the N-terminus, the 1075-residue chain is mRNA 3'-end-processing protein rna14 (1075 aa).

Disordered regions lie at residues 20–185 and 215–237; these read SMGY…NSSL and IARE…GRLP. Composition is skewed to polar residues over residues 54 to 72 and 93 to 112; these read ENLQ…QPQP and PESQ…QPKT. The span at 120-133 shows a compositional bias: acidic residues; the sequence is VEDEDEDDAGDADY. HAT repeat units follow at residues 270–302, 304–335, 346–381, 395–428, 465–498, and 510–542; these read NRID…MESE, NELF…YVRR, QARK…FIRS, QKMD…FEMG, TTLP…WEKG, and AYKG…FCFL. Disordered regions lie at residues 621 to 653 and 840 to 941; these read EETF…SVKN and PTTF…QGSP. Polar residues predominate over residues 868–883; that stretch reads GTPSSRFPEASVTNSP. Positions 885-896 are enriched in basic and acidic residues; the sequence is RPLEDFDDDMSR. Over residues 925 to 940 the composition is skewed to polar residues; sequence ALQVPSSGSQYRSQGS.

It is found in the nucleus. The protein localises to the cytoplasm. Its function is as follows. Component of the cleavage factor IA (CFIA) complex, which is involved in the endonucleolytic cleavage during polyadenylation-dependent pre-mRNA 3'-end formation. The protein is mRNA 3'-end-processing protein rna14 (rna14) of Emericella nidulans (strain FGSC A4 / ATCC 38163 / CBS 112.46 / NRRL 194 / M139) (Aspergillus nidulans).